The following is a 227-amino-acid chain: UPF0173 metal-dependent hydrolase BT9727_4343 (227 aa).

This sequence belongs to the UPF0173 family.

The sequence is that of UPF0173 metal-dependent hydrolase BT9727_4343 from Bacillus thuringiensis subsp. konkukian (strain 97-27).